The sequence spans 1077 residues: RNA polymerase-associated protein CTR9 (1077 aa).

TPR repeat units follow at residues 56-89, 138-174, 183-216, 218-251, 298-332, 338-371, 373-405, 421-455, 462-495, 501-534, 540-572, 664-697, 699-731, 732-764, 768-801, and 830-863; these read KEHWLTIALAYCNHGKTNEGIKLIEMALDVFQNS, IGNMLATVELYYQRGHYDKALETSDLFVKSIHAEDHR, CLFLLLRAKLLYQKKNYMASLKIFQELLVINPVL, PDPRIGIGLCFWQLKDSKMAIKSWQRALQLNPKN, PVLLTLLQTYYYFKGDYQTVLDIYHHRILKMSPMI, SESSFWCGRAHYALGDYRKSFIMFQESLKKNEDN, LAKLGLGQTQIKNNLLEESIITFENLYKTNESL, FDAKTAKNTSAKEQSNLNEKALKYLERYLKLTLAT, SRAYLVISQLYELQNQYKTSLDYLSKALEEMEFI, LEVLNNLACYHFINGDFIKADDLFKQAKAKVSDK, ITLEYNIARTNEKNDCEKSESIYSQVTSLHPAY, GKKSRNPKEQEKSKHSYLKAIQLYQKVLQVDPFN, FAAQGLAIIFAESKRLGPALEILRKVRDSLDNE, DVQLNLAHCYLEMREYGKAIENYELVLKKFDNE, PHILNLLGRAWYARAIKERSVNFYQKALENAKTA, and AETLRRSNPKFRTVQQIKDSLEGLKEGLELFREL. Residues 959-980 are compositionally biased toward basic and acidic residues; the sequence is EREAMAISEHNVKDDSDLSDKD. The interval 959-1077 is disordered; that stretch reads EREAMAISEH…NDNDDNDGLF (119 aa). 2 positions are modified to phosphoserine: serine 1015 and serine 1017. Acidic residues-rich tracts occupy residues 1042-1051 and 1063-1077; these read FIEDSDEEEA and DNDENNDNDDNDGLF.

As to quaternary structure, component of the PAF1 complex which consists of at least CDC73, CTR9, LEO1, PAF1 and RTF1. Interacts with SPT6. Interacts with FACT subunits POB3 and SPT16.

The protein resides in the nucleus. Its subcellular location is the nucleoplasm. In terms of biological role, the PAF1 complex is a multifunctional complex. Involved in transcription initiation via genetic interactions with TATA-binding proteins. Involved in elongation. It regulates 3'-end formation of snR47 by modulating the recruitment or stable association of NRD1 and NAB3 with RNA polymerase II. Also has a role in transcription-coupled histone modification. Required for activation of RAD6 ubiquitin conjugate and the BRE1 ubiquitin ligase which ubiquitinate 'Lys-126' histone H2B. Activates the SET1 histone methyltransferase complex for methylation of 'Lys-4' of histone H3 and for methylation of 'Lys-73' of histone H3 by DOT1 and 'Lys-36' of histone H3 by SET2. In complex with PAF1, required for normal CLN1 and CLN2 G1 cyclin expression in late G1. Also has a role in chromosome segregation where it appears to be involved in microtubule placement. This is RNA polymerase-associated protein CTR9 (CTR9) from Saccharomyces cerevisiae (strain ATCC 204508 / S288c) (Baker's yeast).